A 152-amino-acid polypeptide reads, in one-letter code: Protein SprT-like (152 aa).

Positions 7-148 (QRLVEEVSLQ…GKCKGKLILI (142 aa)) constitute a SprT-like domain. Zn(2+) is bound at residue His67. The active site involves Glu68. His71 provides a ligand contact to Zn(2+).

Belongs to the SprT family. The cofactor is Zn(2+).

It localises to the cytoplasm. The chain is Protein SprT-like from Bacillus cereus (strain ATCC 10987 / NRS 248).